Here is a 921-residue protein sequence, read N- to C-terminus: Protein translocase subunit SecA (921 aa).

Residues Gln86, 104–108, and Asp497 contribute to the ATP site; that span reads GEGKT. Residues 829-838 are compositionally biased toward low complexity; it reads QQAPQQQPQQ. The tract at residues 829–921 is disordered; that stretch reads QQAPQQQPQQ…CHGAIETQKA (93 aa). Positions 839-855 are enriched in pro residues; it reads VAPPPRPQPPQPAPQPP. Zn(2+) contacts are provided by Cys901, Cys903, Cys912, and His913.

Belongs to the SecA family. As to quaternary structure, monomer and homodimer. Part of the essential Sec protein translocation apparatus which comprises SecA, SecYEG and auxiliary proteins SecDF-YajC and YidC. Zn(2+) serves as cofactor.

Its subcellular location is the cell inner membrane. It is found in the cytoplasm. It carries out the reaction ATP + H2O + cellular proteinSide 1 = ADP + phosphate + cellular proteinSide 2.. Its function is as follows. Part of the Sec protein translocase complex. Interacts with the SecYEG preprotein conducting channel. Has a central role in coupling the hydrolysis of ATP to the transfer of proteins into and across the cell membrane, serving both as a receptor for the preprotein-SecB complex and as an ATP-driven molecular motor driving the stepwise translocation of polypeptide chains across the membrane. The chain is Protein translocase subunit SecA from Hyphomonas neptunium (strain ATCC 15444).